Here is a 319-residue protein sequence, read N- to C-terminus: 2,3,4,5-tetrahydropyridine-2,6-dicarboxylate N-succinyltransferase (319 aa).

Residues Asp-167 and Glu-184 each contribute to the Mg(2+) site. Glu-200 acts as the Acyl-anhydride intermediate in catalysis. Residues Arg-202, Gly-217, Ser-220, Ala-243, 258 to 259 (EA), and Lys-278 each bind succinyl-CoA.

It belongs to the type 2 tetrahydrodipicolinate N-succinyltransferase family. In terms of assembly, homotrimer.

It localises to the cytoplasm. The catalysed reaction is (S)-2,3,4,5-tetrahydrodipicolinate + succinyl-CoA + H2O = (S)-2-succinylamino-6-oxoheptanedioate + CoA. The protein operates within amino-acid biosynthesis; L-lysine biosynthesis via DAP pathway; LL-2,6-diaminopimelate from (S)-tetrahydrodipicolinate (succinylase route): step 1/3. Catalyzes the conversion of the cyclic tetrahydrodipicolinate (THDP) into the acyclic N-succinyl-L-2-amino-6-oxopimelate using succinyl-CoA. This chain is 2,3,4,5-tetrahydropyridine-2,6-dicarboxylate N-succinyltransferase, found in Salinispora tropica (strain ATCC BAA-916 / DSM 44818 / JCM 13857 / NBRC 105044 / CNB-440).